The chain runs to 238 residues: MLRFAVTLFAVITSSTCKKYSCLEGETHKLKPSPEPNMQECTLYSESSCCYANFTEQLAHSPVIKINNSYWNRCGQLSKSCEDFTKKIECFYRCSPHAAHWIHPNYTAGIQSVPLCQSFCDDWYEACKDDSACVRNWLMDWEWDESGVNHCKNECIPYSEMYVNGTDMCQSMWGESFKVSESSCLCLQMNKKDMMAIKYLLSESSEESSSVSSSEERACQKKLLKFEKLKEEEGGETR.

A signal peptide spans Met1–Cys17. Disulfide bonds link Cys22–Cys49, Cys41–Cys90, Cys50–Cys94, Cys74–Cys155, Cys81–Cys127, Cys116–Cys186, Cys120–Cys169, Cys133–Cys151, and Cys184–Cys219. N-linked (GlcNAc...) asparagine glycans are attached at residues Asn53, Asn67, and Asn105. N-linked (GlcNAc...) asparagine glycosylation occurs at Asn164. Residues Ser204, Ser205, Ser208, Ser209, Ser210, Ser212, Ser213, and Ser214 each carry the phosphoserine modification.

Belongs to the folate receptor family. In terms of processing, N-glycosylated. In terms of tissue distribution, expressed in egg yolk and egg white (at protein level).

Functionally, required for the transport of riboflavin to the developing oocyte. The sequence is that of Riboflavin-binding protein from Dromaius novaehollandiae (Emu).